The following is a 417-amino-acid chain: Serine hydroxymethyltransferase (417 aa).

Residues leucine 121 and 125–127 each bind (6S)-5,6,7,8-tetrahydrofolate; that span reads GHL. Lysine 229 bears the N6-(pyridoxal phosphate)lysine mark. 355–357 lines the (6S)-5,6,7,8-tetrahydrofolate pocket; that stretch reads SPF.

It belongs to the SHMT family. In terms of assembly, homodimer. It depends on pyridoxal 5'-phosphate as a cofactor.

The protein resides in the cytoplasm. The catalysed reaction is (6R)-5,10-methylene-5,6,7,8-tetrahydrofolate + glycine + H2O = (6S)-5,6,7,8-tetrahydrofolate + L-serine. The protein operates within one-carbon metabolism; tetrahydrofolate interconversion. It functions in the pathway amino-acid biosynthesis; glycine biosynthesis; glycine from L-serine: step 1/1. Its function is as follows. Catalyzes the reversible interconversion of serine and glycine with tetrahydrofolate (THF) serving as the one-carbon carrier. This reaction serves as the major source of one-carbon groups required for the biosynthesis of purines, thymidylate, methionine, and other important biomolecules. Also exhibits THF-independent aldolase activity toward beta-hydroxyamino acids, producing glycine and aldehydes, via a retro-aldol mechanism. This Klebsiella pneumoniae (strain 342) protein is Serine hydroxymethyltransferase.